A 118-amino-acid chain; its full sequence is Large ribosomal subunit protein bL20 (118 aa).

Belongs to the bacterial ribosomal protein bL20 family.

Functionally, binds directly to 23S ribosomal RNA and is necessary for the in vitro assembly process of the 50S ribosomal subunit. It is not involved in the protein synthesizing functions of that subunit. The protein is Large ribosomal subunit protein bL20 of Staphylococcus saprophyticus subsp. saprophyticus (strain ATCC 15305 / DSM 20229 / NCIMB 8711 / NCTC 7292 / S-41).